The following is a 147-amino-acid chain: Large ribosomal subunit protein uL15 (147 aa).

The interval 1 to 47 is disordered; that stretch reads MKLHELKPAEGAVRAKRRLGRGTATGQGKTAGRGQKGQWSRSGGGVR. Residues 23-35 are compositionally biased toward gly residues; that stretch reads TATGQGKTAGRGQ.

The protein belongs to the universal ribosomal protein uL15 family. In terms of assembly, part of the 50S ribosomal subunit.

In terms of biological role, binds to the 23S rRNA. In Clostridioides difficile (strain 630) (Peptoclostridium difficile), this protein is Large ribosomal subunit protein uL15.